Consider the following 350-residue polypeptide: Izumo sperm-egg fusion protein 1 (350 aa).

An N-terminal signal peptide occupies residues 1-21; it reads MGPHFTLLCAALAGCLLPAEG. 5 disulfides stabilise this stretch: C22-C149, C25-C152, C135-C159, C139-C165, and C182-C233. The Extracellular segment spans residues 22–292; it reads CVICDPSVVL…LQPEKMLASR (271 aa). An important for interaction with IZUMO1R region spans residues 148-160; it reads WCKNCKKEVHACR. The region spanning 167–251 is the Ig-like C2-type domain; that stretch reads ERNVEVPQME…PATIINFHVT (85 aa). N-linked (GlcNAc...) asparagine glycosylation occurs at N204. The helical transmembrane segment at 293–313 threads the bilayer; it reads LLGLLICGSLALITGLTFAIF. Residues 314–350 are Cytoplasmic-facing; it reads RRRKVIDFIKSSLFGLGSGAAEQTQVPKEKATDSRQQ. At S325 the chain carries Phosphoserine.

It belongs to the Izumo family. As to quaternary structure, monomer, homodimer; disulfide-linked and homooligomer; depending on the context. Interacts with IZUMO1R/JUNO. IZUMO1 and IZUMO1R/JUNO form a complex with 1:1 stoichiometry. In gamete recognition, IZUMO1R/JUNO first binds to monomeric IZUMO1. The weak, but specific interaction with IZUMO1R/JUNO induces IZUMO1 homodimerization. The process follows a tight binding phase where IZUMO1 bends the entire structure towards the sperm membrane side through a thiol-disulfide exchange reaction. The molecule no longer binds to IZUMO1R/JUNO and instead binds to a putative second oocyte receptor. Interacts with ACE3. Part of a oolemmal binding multimeric complex (IZUMO1 complex) composed at least of IZUMO1 and GLIPR1L1; the complex assemblage is influenced by the maturation status of the male germ cell. Interacts with GLIPR1L1. Interacts with FREY; the interaction retains IZUMO1 at the endoplasmic reticulum membrane and coordinates IZUMO1 complex assembly. Interacts with FCRL3/MAIA (via extracellular domain); the interaction replaces IZUMO1R/JUNO as IZUMO1 receptor after sperm-egg adhesion. Interacts with WDR54. Forms a complex with SPACA6 and TMEM81 on spermatocyte cell membrane. Post-translationally, N-glycosylated. Glycosylation is not essential for fusion and for proper protein trafficking in sperm. Phosphorylated. The cytoplasmic C-terminus is phosphorylated and undergoes phosphorylation changes during epididymal transit. In terms of tissue distribution, sperm-specific (at protein level). Detectable on sperm surface only after the acrosome reaction.

It is found in the cell membrane. Its subcellular location is the cytoplasmic vesicle. It localises to the secretory vesicle. The protein resides in the acrosome membrane. In terms of biological role, essential sperm cell-surface protein required for fertilization by acting as a ligand for IZUMO1R/JUNO receptor on egg. The IZUMO1:IZUMO1R/JUNO interaction is a necessary adhesion event between sperm and egg that is required for fertilization but is not sufficient for cell fusion. The ligand-receptor interaction probably does not act as a membrane 'fusogen'. Acts a ligand for the human-specific oolemma epitope FCRL3/MAIA during fertilization. FCRL3/MAIA replaces IZUMO1R/JUNO as IZUMO1 receptor after sperm-egg adhesion, which permits species-specific gamete fusion. Plays a critical role in sperm-oolemma binding prior to plasma membrane fusion. Can mediate cell-cell fusion in cultured mammalian cells independently of its binding to IZUMO1R/JUNO. In Homo sapiens (Human), this protein is Izumo sperm-egg fusion protein 1.